Here is a 375-residue protein sequence, read N- to C-terminus: Growth/differentiation factor 8 (375 aa).

A signal peptide spans 1 to 23; that stretch reads MQKLAVYVYIYLFVQISVDPVAL. Positions 24 to 266 are excised as a propeptide; it reads DGSSQPTENT…VTDTPKRSRR (243 aa). Asparagine 71 carries N-linked (GlcNAc...) asparagine glycosylation. Cystine bridges form between cysteine 272–cysteine 282, cysteine 281–cysteine 340, cysteine 309–cysteine 372, and cysteine 313–cysteine 374.

Belongs to the TGF-beta family. Homodimer; disulfide-linked.

It is found in the secreted. Acts specifically as a negative regulator of skeletal muscle growth. The polypeptide is Growth/differentiation factor 8 (MSTN) (Excalfactoria chinensis (Blue-breasted quail)).